A 269-amino-acid polypeptide reads, in one-letter code: Leucinostatins biosynthesis cluster protein T (269 aa).

The first 15 residues, 1–15 (MHIILTGTGLVGAIA), serve as a signal peptide directing secretion. N254 is a glycosylation site (N-linked (GlcNAc...) asparagine).

Functionally, part of the gene cluster that mediates the biosynthesis of the lipopeptide antibiotics leucinostatins that show extensive biological activities, including antimalarial, antiviral, antibacterial, antifungal, and antitumor activities, as well as phytotoxic. The function of lcsT within the leucinostatins biosynthesis has not been identified yet. The polypeptide is Leucinostatins biosynthesis cluster protein T (Purpureocillium lilacinum (Paecilomyces lilacinus)).